A 370-amino-acid polypeptide reads, in one-letter code: Ubiquitin carboxyl-terminal hydrolase 12 (370 aa).

The Required for plasma membrane localization of USP12/WDR20 motif lies at M1–L4. One can recognise a USP domain in the interval F39–R369. The active-site Nucleophile is the C48. Residues Q146 to D157 show a composition bias toward basic and acidic residues. Positions Q146–D168 are disordered. 4 residues coordinate Zn(2+): C186, C189, C233, and C236. Catalysis depends on H317, which acts as the Proton acceptor.

The protein belongs to the peptidase C19 family. USP12/USP46 subfamily. Interacts with WDR48. Interacts with WDR20; this interaction promotes translocation of the USP12 complex to the plasma membrane. Component of the USP12/WDR20/WDR48 deubiquitinating complex. Component of the USP12/DMWD/WDR48 deubiquitinating complex. Interacts with PHLPP1. Interacts with RBPJ. Interacts with CBP; this interaction blocks the acetyltransferase activity of CREBBP.

It is found in the nucleus. Its subcellular location is the cytoplasm. The protein resides in the cell membrane. It carries out the reaction Thiol-dependent hydrolysis of ester, thioester, amide, peptide and isopeptide bonds formed by the C-terminal Gly of ubiquitin (a 76-residue protein attached to proteins as an intracellular targeting signal).. Its activity is regulated as follows. Activated by interaction with WDR20; WDR48 and DMWD through different allosteric mechanisms. Its function is as follows. Deubiquitinating enzyme that plays various roles in the regulation of the immune response and inflammation. During TCR engagement and activation, translocates into the cytoplasm and deubiquitinates its substrates LAT and TRAT1 and prevents their lysosome-dependent degradation to stabilize the TCR signaling complex at the plasma membrane. Plays an essential role in the selective LPS-induced macrophage response through the activation of NF-kappa-B pathway. In addition, promotes that antiviral immune response through targeting DNA sensor IFI16 to inhibit its proteasome-dependent degradation. Participates in the interferon signaling pathway and antiviral response independently of its deubiquitinase activity by maintaining nuclear phosphorylated STAT1 levels via inhibition of its CREBBP-mediated acetylation and subsequent dephosphorylation. Plays an intrinsic role in promoting the differentiation, activation and proliferation of CD4(+) T-cell by activating the NF-kappa-B signaling pathway through deubiquitinating and stabilizing B-cell lymphoma/leukemia 10/BCL10. In myeloid-derived suppressor cells promotes the activation of the NF-kappa-B via deubiquitination and stabilization of RELA. Regulates the 'Lys-63'-linked polyubiquitin chains of BAX and thereby modulates the mitochondrial apoptotic process. Negative regulator of NOTCH signaling that specifically deubiquitinates non-activated NOTCH receptors to target them for lysosomal degradation; deubiquitination of NOTCH stimulates its transport form late endosomes to lysosomes. Protects neurons against HTT/huntingtin-induced polyglutamine expansion-dependent neurodegeneration through regulation of autophagic flux. This function is independent of deubiquitinase activity or of other components of the USP12-WDR20-WDR48 deubiquitinating complex. In complex with WDR48, acts as a potential tumor suppressor by positively regulating PHLPP1 stability. This chain is Ubiquitin carboxyl-terminal hydrolase 12 (Usp12), found in Mus musculus (Mouse).